The following is an 812-amino-acid chain: DNA gyrase subunit A (812 aa).

The 466-residue stretch at 31–496 folds into the Topo IIA-type catalytic domain; that stretch reads IPDVRDGLKP…GNTDFNVEDV (466 aa). Residue tyrosine 119 is the O-(5'-phospho-DNA)-tyrosine intermediate of the active site. Positions 523-529 match the GyrA-box motif; sequence QGRGGKG.

This sequence belongs to the type II topoisomerase GyrA/ParC subunit family. In terms of assembly, heterotetramer, composed of two GyrA and two GyrB chains. In the heterotetramer, GyrA contains the active site tyrosine that forms a transient covalent intermediate with DNA, while GyrB binds cofactors and catalyzes ATP hydrolysis.

The protein localises to the cytoplasm. It carries out the reaction ATP-dependent breakage, passage and rejoining of double-stranded DNA.. In terms of biological role, a type II topoisomerase that negatively supercoils closed circular double-stranded (ds) DNA in an ATP-dependent manner to modulate DNA topology and maintain chromosomes in an underwound state. Negative supercoiling favors strand separation, and DNA replication, transcription, recombination and repair, all of which involve strand separation. Also able to catalyze the interconversion of other topological isomers of dsDNA rings, including catenanes and knotted rings. Type II topoisomerases break and join 2 DNA strands simultaneously in an ATP-dependent manner. This Kosmotoga olearia (strain ATCC BAA-1733 / DSM 21960 / TBF 19.5.1) protein is DNA gyrase subunit A.